The sequence spans 308 residues: Very-long-chain enoyl-CoA reductase (308 aa).

The Cytoplasmic portion of the chain corresponds to 1-86 (MKHYEVEIRD…YFRDLGAQIS (86 aa)). Residue lysine 22 is modified to N6-acetyllysine. Serine 58 carries the post-translational modification Phosphoserine. N6-acetyllysine is present on lysine 60. Residues 87 to 106 (WVTVFLTEYAGPLFIYLLFY) traverse the membrane as a helical segment. At 107–124 (FRVPFIYGRKYDFTSSRH) the chain is on the lumenal side. A helical transmembrane segment spans residues 125–147 (TVVHLACMCHSFHYIKRLLETLF). Residues 148–158 (VHRFSHGTMPL) lie on the Cytoplasmic side of the membrane. Residues 159 to 180 (RNIFKNCTYYWGFAAWMAYYIN) form a helical membrane-spanning segment. The Lumenal portion of the chain corresponds to 181 to 189 (HPLYTPPTY). The chain crosses the membrane as a helical span at residues 190-216 (GVQQVKLALAIFVICQLGNFSIHMALR). The Cytoplasmic segment spans residues 217–245 (DLRPAGSKTRKIPYPTKNPFTWLFLLVSC). A helical membrane pass occupies residues 246 to 262 (PNYTYEVGSWIGFAIMT). Topologically, residues 263 to 264 (QC) are lumenal. Residues 265-292 (VPVALFSLVGFTQMTIWAKGKHRSYLKE) form a helical membrane-spanning segment. Residues 293–308 (FRDYPPLRMPIIPFLL) are Cytoplasmic-facing.

It belongs to the steroid 5-alpha reductase family. As to quaternary structure, interacts with ELOVL1 and LASS2. Glycosylated. Expressed at high levels in brain and is also found at lower levels in several other tissues.

It localises to the endoplasmic reticulum membrane. The catalysed reaction is a very-long-chain 2,3-saturated fatty acyl-CoA + NADP(+) = a very-long-chain (2E)-enoyl-CoA + NADPH + H(+). The enzyme catalyses octadecanoyl-CoA + NADP(+) = (2E)-octadecenoyl-CoA + NADPH + H(+). It carries out the reaction (2E,7Z,10Z,13Z,16Z)-docosapentaenoyl-CoA + NADPH + H(+) = (7Z,10Z,13Z,16Z)-docosatetraenoyl-CoA + NADP(+). It catalyses the reaction (2E,7Z,10Z,13Z,16Z,19Z)-docosahexaenoyl-CoA + NADPH + H(+) = (7Z,10Z,13Z,16Z,19Z)-docosapentaenoyl-CoA + NADP(+). The catalysed reaction is (2E,8Z,11Z,14Z)-eicosatetraenoyl-CoA + NADPH + H(+) = (8Z,11Z,14Z)-eicosatrienoyl-CoA + NADP(+). The enzyme catalyses (2E)-hexadecenoyl-CoA + NADPH + H(+) = hexadecanoyl-CoA + NADP(+). The protein operates within lipid metabolism; fatty acid biosynthesis. Its pathway is lipid metabolism; sphingolipid metabolism. Involved in both the production of very long-chain fatty acids for sphingolipid synthesis and the degradation of the sphingosine moiety in sphingolipids through the sphingosine 1-phosphate metabolic pathway. Catalyzes the last of the four reactions of the long-chain fatty acids elongation cycle. This endoplasmic reticulum-bound enzymatic process, allows the addition of 2 carbons to the chain of long- and very long-chain fatty acids/VLCFAs per cycle. This enzyme reduces the trans-2,3-enoyl-CoA fatty acid intermediate to an acyl-CoA that can be further elongated by entering a new cycle of elongation. Thereby, it participates in the production of VLCFAs of different chain lengths that are involved in multiple biological processes as precursors of membrane lipids and lipid mediators. Catalyzes the saturation step of the sphingosine 1-phosphate metabolic pathway, the conversion of trans-2-hexadecenoyl-CoA to palmitoyl-CoA. The polypeptide is Very-long-chain enoyl-CoA reductase (Tecr) (Rattus norvegicus (Rat)).